The following is a 98-amino-acid chain: Integration host factor subunit beta (98 aa).

This sequence belongs to the bacterial histone-like protein family. In terms of assembly, heterodimer of an alpha and a beta chain.

In terms of biological role, this protein is one of the two subunits of integration host factor, a specific DNA-binding protein that functions in genetic recombination as well as in transcriptional and translational control. The chain is Integration host factor subunit beta from Pseudomonas putida (strain GB-1).